A 285-amino-acid polypeptide reads, in one-letter code: Coagulation factor IX (285 aa).

Tyrosine 23 is modified (sulfotyrosine). Residue asparagine 25 is glycosylated (N-linked (GlcNAc...) asparagine). Residue threonine 27 is modified to Phosphothreonine; alternate. An O-linked (GalNAc...) threonine; alternate glycan is attached at threonine 27. N-linked (GlcNAc...) asparagine glycosylation occurs at asparagine 45. The O-linked (GalNAc...) threonine glycan is linked to threonine 47. The Peptidase S1 domain occupies 59–285 (VVGGEDAKPG…YTKVSRYVNW (227 aa)). An intrachain disulfide couples cysteine 84 to cysteine 100. Histidine 99 serves as the catalytic Charge relay system. Ca(2+) contacts are provided by asparagine 115, glutamate 120, and glutamate 123. Residues asparagine 127 and asparagine 138 are each glycosylated (N-linked (GlcNAc...) asparagine). The Charge relay system role is filled by aspartate 147. Cystine bridges form between cysteine 214–cysteine 228 and cysteine 239–cysteine 267. The active-site Charge relay system is the serine 243.

It belongs to the peptidase S1 family. In terms of assembly, heterodimer of a light chain and a heavy chain; disulfide-linked. Interacts (inactive and activated) with F11 (activated) in calcium-dependent manner. Interacts with SERPINC1. Activated by factor XIa, which excises the activation peptide. The propeptide can also be removed by snake venom protease. Activated by coagulation factor VIIa-tissue factor (F7-F3) complex in calcium-dependent manner.

It localises to the secreted. The enzyme catalyses Selective cleavage of Arg-|-Ile bond in factor X to form factor Xa.. Functionally, factor IX is a vitamin K-dependent plasma protein that participates in the intrinsic pathway of blood coagulation by converting factor X to its active form in the presence of Ca(2+) ions, phospholipids, and factor VIIIa. This Cavia porcellus (Guinea pig) protein is Coagulation factor IX (F9).